The chain runs to 99 residues: Protein IDA-LIKE 3 (99 aa).

Positions 1-32 (MSSRSHRSRKYQLTRTIPILVLLLVLLSCCNG) are cleaved as a signal peptide. Polar residues predominate over residues 36 to 45 (TNVFNTSSPP). Disordered regions lie at residues 36 to 58 (TNVF…HDHV) and 73 to 99 (SLPR…STKT). Positions 46-58 (KQKDVVSPPHDHV) are enriched in basic and acidic residues.

In terms of tissue distribution, expressed in flowers and seedlings. Detected at the base of pedicel, in the floral abscission zone and in vascular tissues.

The protein localises to the secreted. Its subcellular location is the extracellular space. May be involved in floral abscission. This is Protein IDA-LIKE 3 (IDL3) from Arabidopsis thaliana (Mouse-ear cress).